The following is a 219-amino-acid chain: Probable oxidoreductase virH (219 aa).

The protein belongs to the oxidoreductase OpS7 family.

Its pathway is secondary metabolite biosynthesis. In terms of biological role, probable oxidoreductase; part of the gene cluster that mediates the biosynthesis of virensols and trichoxide, fungal natural products that contain or are derived from a salicylaldehyde core. The pathway begins with the synthesis of the reduced chain in virensol C by the highly reducing polyketide synthase virA via condensation of one acetate and 8 malonate units. VirA has interesting programming rules since the first 2 ketides are fully reduced, the 3 following ketides undergo beta-dehydration, and the last 3 ketides are only reduced to beta-hydroxys to yield the trihydroxy portion. The production of aldehyde virensol C by virA alone is surprising, since virA does not contain a reductase (R) domain that is typically associated with reductive product release in HRPKS. The cupin-domain enzyme virC is involved in enhancing virA product turnover. The short-chain dehydrogenase virB then oxidizes the C-7 alcohol of virensol C to a ketone, yielding virensol D. Virensol D is further transformed to salicylaldehyde 5-deoxyaurocitrin by the short-chain dehydrogenase virD. VirD catalyzes the dehydrogenation of C-3 to form the beta-ketone aldehyde, which is followed by the generation of the nucleophilic C-2 that is required for the intramolecular aldol condensation between C-2 and C-7, itself followed by dehydration and aromatization which leads to salicylaldehyde 5-deoxyaurocitrin. While the dehydrogenation of virensol D is definitely catalyzed by virD, the aldol condensation and dehydration may be uncatalyzed or assisted by virD. The short chain dehydrogenase virG then converts salicylaldehyde 5-deoxyaurocitrin into virensol B which is further hydroxylated by the cytochrome P450 monooxygenase virE to yield the hydroquinone virensol A. VirI then may oxidize virensol A to form the quinone, while virH performs the epoxidation. Finally, the two remaining short-chain dehydrogenases, virK and virL, are probably responsible for reducing the ketones to the corresponding alcohols to furnish the epoxycyclohexanol structure in trichoxide. The chain is Probable oxidoreductase virH from Hypocrea virens (strain Gv29-8 / FGSC 10586) (Gliocladium virens).